The sequence spans 533 residues: Lanosterol 14-alpha demethylase (533 aa).

A heme-binding site is contributed by Cys472.

Belongs to the cytochrome P450 family. Heme serves as cofactor.

Its subcellular location is the membrane. The catalysed reaction is a 14alpha-methyl steroid + 3 reduced [NADPH--hemoprotein reductase] + 3 O2 = a Delta(14) steroid + formate + 3 oxidized [NADPH--hemoprotein reductase] + 4 H2O + 4 H(+). The enzyme catalyses a 14alpha-methyl steroid + reduced [NADPH--hemoprotein reductase] + O2 = a 14alpha-hydroxymethyl steroid + oxidized [NADPH--hemoprotein reductase] + H2O + H(+). It carries out the reaction a 14alpha-hydroxymethyl steroid + reduced [NADPH--hemoprotein reductase] + O2 = a 14alpha-formyl steroid + oxidized [NADPH--hemoprotein reductase] + 2 H2O + H(+). It catalyses the reaction a 14alpha-formyl steroid + reduced [NADPH--hemoprotein reductase] + O2 = a Delta(14) steroid + formate + oxidized [NADPH--hemoprotein reductase] + H2O + 2 H(+). The catalysed reaction is lanosterol + 3 reduced [NADPH--hemoprotein reductase] + 3 O2 = 4,4-dimethyl-5alpha-cholesta-8,14,24-trien-3beta-ol + formate + 3 oxidized [NADPH--hemoprotein reductase] + 4 H2O + 4 H(+). The enzyme catalyses lanosterol + reduced [NADPH--hemoprotein reductase] + O2 = 32-hydroxylanosterol + oxidized [NADPH--hemoprotein reductase] + H2O + H(+). It carries out the reaction 32-hydroxylanosterol + reduced [NADPH--hemoprotein reductase] + O2 = 32-oxolanosterol + oxidized [NADPH--hemoprotein reductase] + 2 H2O + H(+). It catalyses the reaction 32-oxolanosterol + reduced [NADPH--hemoprotein reductase] + O2 = 4,4-dimethyl-5alpha-cholesta-8,14,24-trien-3beta-ol + formate + oxidized [NADPH--hemoprotein reductase] + H2O + 2 H(+). The catalysed reaction is eburicol + 3 reduced [NADPH--hemoprotein reductase] + 3 O2 = 14-demethyleburicol + formate + 3 oxidized [NADPH--hemoprotein reductase] + 4 H2O + 4 H(+). The enzyme catalyses eburicol + reduced [NADPH--hemoprotein reductase] + O2 = 32-hydroxyeburicol + oxidized [NADPH--hemoprotein reductase] + H2O + H(+). It carries out the reaction 32-hydroxyeburicol + reduced [NADPH--hemoprotein reductase] + O2 = 32-oxoeburicol + oxidized [NADPH--hemoprotein reductase] + 2 H2O + H(+). It catalyses the reaction 32-oxoeburicol + reduced [NADPH--hemoprotein reductase] + O2 = 14-demethyleburicol + formate + oxidized [NADPH--hemoprotein reductase] + H2O + 2 H(+). The protein operates within steroid biosynthesis; zymosterol biosynthesis; zymosterol from lanosterol: step 1/6. In terms of biological role, sterol 14alpha-demethylase that plays a critical role in the third module of ergosterol biosynthesis pathway, being ergosterol the major sterol component in fungal membranes that participates in a variety of functions. The third module or late pathway involves the ergosterol synthesis itself through consecutive reactions that mainly occur in the endoplasmic reticulum (ER) membrane. In filamentous fungi, during the initial step of this module, lanosterol (lanosta-8,24-dien-3beta-ol) can be metabolized to eburicol. Sterol 14alpha-demethylase catalyzes the three-step oxidative removal of the 14alpha-methyl group (C-32) of both these sterols in the form of formate, and converts eburicol and lanosterol to 14-demethyleburicol (4,4,24-trimethylergosta-8,14,24(28)-trienol) and 4,4-dimethyl-5alpha-cholesta-8,14,24-trien-3beta-ol, respectively, which are further metabolized by other enzymes in the pathway to ergosterol. Can also use substrates not intrinsic to fungi, such as 24,25-dihydrolanosterol (DHL), producing 4,4-dimethyl-8,14-cholestadien-3-beta-ol, but at lower rates than the endogenous substrates. The protein is Lanosterol 14-alpha demethylase (ERG11) of Candida glabrata (strain ATCC 2001 / BCRC 20586 / JCM 3761 / NBRC 0622 / NRRL Y-65 / CBS 138) (Yeast).